A 342-amino-acid polypeptide reads, in one-letter code: MGEIDMNEDVYVLGIETSCDETAAAVVKNGKEIVSNVVASQMESHRRFGGVVPEIASRHHVEQITLVIEEAMQRAGVSFSNLDAVAVTAGPGLVGALLVGVNAAKALAFAHGLPLVGVHHIAGHIYANQLVAEMKFPLLALVVSGGHTELIYMEEHGKFTVIGETRDDAAGEAYDKVARALGLPYPGGPHIDRLAHEGEPVIDLPRAWLEEGSYDFSFSGLKSAVLNTLHNAKQRGEEIDPKHMAASFQESVVDVLVTKTVQAAKQYRVRQVLLAGGVAANRGLRSALQDKMKELPGVELVIPPLSLCTDNAAMIAAAGTVLYWQGKRSDLALNANPGLPLV.

Positions 120 and 124 each coordinate Fe cation. Substrate contacts are provided by residues 142-146, Asp175, Gly188, Asp192, and Asn281; that span reads VVSGG. Asp310 lines the Fe cation pocket.

This sequence belongs to the KAE1 / TsaD family. It depends on Fe(2+) as a cofactor.

The protein resides in the cytoplasm. The catalysed reaction is L-threonylcarbamoyladenylate + adenosine(37) in tRNA = N(6)-L-threonylcarbamoyladenosine(37) in tRNA + AMP + H(+). Functionally, required for the formation of a threonylcarbamoyl group on adenosine at position 37 (t(6)A37) in tRNAs that read codons beginning with adenine. Is involved in the transfer of the threonylcarbamoyl moiety of threonylcarbamoyl-AMP (TC-AMP) to the N6 group of A37, together with TsaE and TsaB. TsaD likely plays a direct catalytic role in this reaction. The sequence is that of tRNA N6-adenosine threonylcarbamoyltransferase from Geobacillus thermodenitrificans (strain NG80-2).